A 359-amino-acid polypeptide reads, in one-letter code: Peptide chain release factor 1 (359 aa).

Gln236 carries the N5-methylglutamine modification.

This sequence belongs to the prokaryotic/mitochondrial release factor family. Post-translationally, methylated by PrmC. Methylation increases the termination efficiency of RF1.

It localises to the cytoplasm. Functionally, peptide chain release factor 1 directs the termination of translation in response to the peptide chain termination codons UAG and UAA. The chain is Peptide chain release factor 1 from Streptococcus pneumoniae (strain Taiwan19F-14).